The following is a 205-amino-acid chain: MIALVDYGGGNLKSVANAIHALGYEFTLTSDPKEILSAQAVILPGVGAAADTVAGLRAKGLDEAIKELVKRDIPLLAICVGMQVLFDSTEEGGQTKCLGILAGEVKRLPDGVKIPQMGWNQLKQRVSHPLFEGIPDGTDFYFVHSYYASPADRNIIGATTDYGVDFCSLVINKRLIATQFHPEKSGSYGLKLYQNFFKMALGDKK.

The Glutamine amidotransferase type-1 domain maps to 1–205 (MIALVDYGGG…FFKMALGDKK (205 aa)). Cys79 functions as the Nucleophile in the catalytic mechanism. Catalysis depends on residues His181 and Glu183.

Heterodimer of HisH and HisF.

It is found in the cytoplasm. It carries out the reaction 5-[(5-phospho-1-deoxy-D-ribulos-1-ylimino)methylamino]-1-(5-phospho-beta-D-ribosyl)imidazole-4-carboxamide + L-glutamine = D-erythro-1-(imidazol-4-yl)glycerol 3-phosphate + 5-amino-1-(5-phospho-beta-D-ribosyl)imidazole-4-carboxamide + L-glutamate + H(+). It catalyses the reaction L-glutamine + H2O = L-glutamate + NH4(+). Its pathway is amino-acid biosynthesis; L-histidine biosynthesis; L-histidine from 5-phospho-alpha-D-ribose 1-diphosphate: step 5/9. IGPS catalyzes the conversion of PRFAR and glutamine to IGP, AICAR and glutamate. The HisH subunit catalyzes the hydrolysis of glutamine to glutamate and ammonia as part of the synthesis of IGP and AICAR. The resulting ammonia molecule is channeled to the active site of HisF. The polypeptide is Imidazole glycerol phosphate synthase subunit HisH (Dehalococcoides mccartyi (strain CBDB1)).